The primary structure comprises 404 residues: Probable protein phosphatase 1N (404 aa).

In terms of domain architecture, PPM-type phosphatase spans 59 to 319; the sequence is RFGASAVQGW…DNMTCMVVCF (261 aa). 4 residues coordinate Mn(2+): aspartate 96, glycine 97, aspartate 267, and aspartate 310.

Belongs to the PP2C family. Mg(2+) is required as a cofactor. It depends on Mn(2+) as a cofactor.

It catalyses the reaction O-phospho-L-seryl-[protein] + H2O = L-seryl-[protein] + phosphate. It carries out the reaction O-phospho-L-threonyl-[protein] + H2O = L-threonyl-[protein] + phosphate. This chain is Probable protein phosphatase 1N (Ppm1n), found in Mus musculus (Mouse).